A 697-amino-acid polypeptide reads, in one-letter code: Elongation factor G (697 aa).

The region spanning 8-283 (EHIRNIGICA…AVVDFLPSPT (276 aa)) is the tr-type G domain. Residues 17–24 (AHIDAGKT), 81–85 (DTPGH), and 135–138 (NKMD) each bind GTP.

This sequence belongs to the TRAFAC class translation factor GTPase superfamily. Classic translation factor GTPase family. EF-G/EF-2 subfamily.

It is found in the cytoplasm. Its function is as follows. Catalyzes the GTP-dependent ribosomal translocation step during translation elongation. During this step, the ribosome changes from the pre-translocational (PRE) to the post-translocational (POST) state as the newly formed A-site-bound peptidyl-tRNA and P-site-bound deacylated tRNA move to the P and E sites, respectively. Catalyzes the coordinated movement of the two tRNA molecules, the mRNA and conformational changes in the ribosome. The chain is Elongation factor G from Rickettsia rhipicephali.